The following is a 346-amino-acid chain: Phenylalanine--tRNA ligase alpha subunit (346 aa).

A Mg(2+)-binding site is contributed by Glu261.

Belongs to the class-II aminoacyl-tRNA synthetase family. Phe-tRNA synthetase alpha subunit type 1 subfamily. Tetramer of two alpha and two beta subunits. The cofactor is Mg(2+).

Its subcellular location is the cytoplasm. It catalyses the reaction tRNA(Phe) + L-phenylalanine + ATP = L-phenylalanyl-tRNA(Phe) + AMP + diphosphate + H(+). This is Phenylalanine--tRNA ligase alpha subunit from Streptococcus agalactiae serotype III (strain NEM316).